Reading from the N-terminus, the 307-residue chain is uncharacterized protein (307 aa).

The ABC transporter domain maps to 5-233; the sequence is VQTNGLTKTY…NTEYIELVTP (229 aa). Residue 37–44 coordinates ATP; the sequence is GPNGAGKT.

Belongs to the ABC transporter superfamily.

This is an uncharacterized protein from Bacillus subtilis (strain 168).